Consider the following 699-residue polypeptide: SPX domain-containing membrane protein At4g22990 (699 aa).

Residues 2 to 145 (VAFGKKLKER…GYRFTNYYVK (144 aa)) enclose the SPX domain. 6 helical membrane passes run 249–269 (FMSL…TYII), 280–300 (LGAA…AQLF), 317–337 (LIFS…AFDF), 339–358 (SIAV…ARAV), 377–397 (AGFV…AGLL), and 413–433 (LPGW…AISF). Acidic residues predominate over residues 475–490 (IEEQGEDECDGSEEAS). Positions 475 to 494 (IEEQGEDECDGSEEASEDSR) are disordered. A run of 5 helical transmembrane segments spans residues 515 to 535 (LLIY…SSVI), 546 to 566 (SVAI…LVVG), 578 to 598 (ILLV…HVVV), 606 to 626 (VCSG…NLSL), and 671 to 691 (MLLN…IVAT).

This sequence belongs to the major facilitator superfamily.

It localises to the membrane. This Arabidopsis thaliana (Mouse-ear cress) protein is SPX domain-containing membrane protein At4g22990.